The chain runs to 196 residues: MSYYAFEGLIPVVHPTAFVHPSAVLIGDVIVGAGVYIGPLASLRGDYGRLIVQAGANIQDGCIMHGYCDTDTIVGENGHIGHGAILHGCLIGRDALVGMNSVIMDGAVIGEESIVAAMSFVKAGFRGEKRQLLMGTPARAVRNVSDDELHWKRLNTKEYQDLVGRCHVSLHETQPLRQMEENRPRLQGTTDVTPKR.

Residues 174–196 are disordered; sequence QPLRQMEENRPRLQGTTDVTPKR. The span at 187-196 shows a compositional bias: polar residues; the sequence is QGTTDVTPKR.

This sequence belongs to the transferase hexapeptide repeat family.

It participates in amine and polyamine metabolism; carnitine metabolism. Its function is as follows. Overproduction of CaiE stimulates the activity of CaiB and CaiD. The sequence is that of Carnitine operon protein CaiE (caiE) from Escherichia coli (strain K12).